A 515-amino-acid polypeptide reads, in one-letter code: 2-isopropylmalate synthase (515 aa).

Residues 4 to 264 form the Pyruvate carboxyltransferase domain; sequence VKIFDTTLRD…NIGINQDTTQ (261 aa). The Mn(2+) site is built by Asp13, His201, His203, and Asn237. Residues 390–515 are regulatory domain; sequence ELDYLSVNTG…RQTTSAQEGI (126 aa).

The protein belongs to the alpha-IPM synthase/homocitrate synthase family. LeuA type 1 subfamily. Homodimer. It depends on Mn(2+) as a cofactor.

The protein localises to the cytoplasm. The enzyme catalyses 3-methyl-2-oxobutanoate + acetyl-CoA + H2O = (2S)-2-isopropylmalate + CoA + H(+). It functions in the pathway amino-acid biosynthesis; L-leucine biosynthesis; L-leucine from 3-methyl-2-oxobutanoate: step 1/4. Its function is as follows. Catalyzes the condensation of the acetyl group of acetyl-CoA with 3-methyl-2-oxobutanoate (2-ketoisovalerate) to form 3-carboxy-3-hydroxy-4-methylpentanoate (2-isopropylmalate). The chain is 2-isopropylmalate synthase from Halothermothrix orenii (strain H 168 / OCM 544 / DSM 9562).